The primary structure comprises 479 residues: tRNA-dihydrouridine(20) synthase [NAD(P)+] (479 aa).

FMN contacts are provided by residues 14–16 (PMV) and Gln-87. Cys-116 functions as the Proton donor in the catalytic mechanism. FMN-binding positions include Lys-159, His-187, 221–223 (NGD), and 245–246 (AR).

It belongs to the Dus family. Dus2 subfamily. It depends on FMN as a cofactor.

The protein resides in the cytoplasm. The protein localises to the nucleus. It carries out the reaction 5,6-dihydrouridine(20) in tRNA + NADP(+) = uridine(20) in tRNA + NADPH + H(+). It catalyses the reaction 5,6-dihydrouridine(20) in tRNA + NAD(+) = uridine(20) in tRNA + NADH + H(+). The catalysed reaction is a 5,6-dihydrouridine in mRNA + NAD(+) = a uridine in mRNA + NADH + H(+). The enzyme catalyses a 5,6-dihydrouridine in mRNA + NADP(+) = a uridine in mRNA + NADPH + H(+). Functionally, catalyzes the NADPH-dependent synthesis of dihydrouridine, a modified base found in the D-loop of most tRNAs. Specifically modifies U20 in cytoplasmic tRNAs. Also able to mediate dihydrouridylation of some mRNAs, thereby affecting their translation. This chain is tRNA-dihydrouridine(20) synthase [NAD(P)+], found in Schizosaccharomyces pombe (strain 972 / ATCC 24843) (Fission yeast).